Consider the following 151-residue polypeptide: Alpha-latroinsectotoxin-Lh1a (151 aa).

8 ANK repeats span residues 21–37 (TDVT…DLNA), 41–52 (ILIRNTNAVINI), 56–80 (VGLT…YLND), 84–104 (NGMT…VDFL), 105–116 (KWTPLHLAILFK), 117–125 (QLVIELLAK), 126–146 (TFFD…AVEK), and 147–151 (YIAAR).

This sequence belongs to the cationic peptide 01 (latrotoxin) family. 02 (alpha-latroinsectotoxin) subfamily. As to quaternary structure, homotetramer in membranes. In terms of tissue distribution, expressed by the venom gland.

It localises to the secreted. The protein localises to the target cell membrane. Its function is as follows. Insecticidal presynaptic neurotoxin that induces massive neurotransmitter release at insect (but not vertebrate) neuromuscular junctions. Native toxin forms cation-permeable pores (with high permeability to calcium) in lipid membranes locust muscle membrane and artificial lipid bilayers. May bind to insect neurexin-1 homolog, insect adhesion G protein-coupled receptor L1 homolog, and insect receptor-type tyrosine-protein phosphatase S homolog, and induces neurotransmitter exocytosis both by forming tetrameric pores in membranes and signaling via G protein-coupled receptor. Oligomerization is a process independent of divalent cations. The toxin forms channels with 0.55-0.58 nm entrance diameter and a relatively small conductance in planar phospholipid membranes. The sequence is that of Alpha-latroinsectotoxin-Lh1a from Latrodectus hasselti (Redback spider).